The chain runs to 318 residues: NADH-ubiquinone oxidoreductase chain 1 (318 aa).

Helical transmembrane passes span 2-22 (FMANLLLVILPALVAMAFLTL), 69-89 (MLYLTAPALALSIALLLWTPL), 98-118 (FNLGLLFILATSSLAVYSILW), 140-160 (ISYEVTLAIILLSVLLMSGSF), 171-191 (HSWLLFPSWPLAMMWFTSTLA), 222-242 (LFFMGEYMNIIMMNALTTTIF), 253-273 (ETYSINFMAKALLLTTLFLWI), and 285-305 (LMHLLWKNFLPLTLALCMWYI).

This sequence belongs to the complex I subunit 1 family. Core subunit of respiratory chain NADH dehydrogenase (Complex I) which is composed of 45 different subunits.

It localises to the mitochondrion inner membrane. It carries out the reaction a ubiquinone + NADH + 5 H(+)(in) = a ubiquinol + NAD(+) + 4 H(+)(out). Functionally, core subunit of the mitochondrial membrane respiratory chain NADH dehydrogenase (Complex I) which catalyzes electron transfer from NADH through the respiratory chain, using ubiquinone as an electron acceptor. Essential for the catalytic activity and assembly of complex I. This chain is NADH-ubiquinone oxidoreductase chain 1 (MT-ND1), found in Saguinus leucopus (Silvery-brown bare-face tamarin).